The following is a 323-amino-acid chain: Calcium homeostasis modulator protein 2 (323 aa).

At 1–21 (MAALIAENFRFLSLFFKSKDV) the chain is on the cytoplasmic side. The interval 14–39 (LFFKSKDVMIFNGLVALGTVGSQELF) is central pore. The chain crosses the membrane as a helical span at residues 22 to 43 (MIFNGLVALGTVGSQELFTVVA). Over 44-52 (FHCPCSPAR) the chain is Extracellular. Cystine bridges form between Cys-46/Cys-130 and Cys-48/Cys-162. Residues 53-76 (NYLYGLAAIGVPALALFLIGVILN) traverse the membrane as a helical segment. The Cytoplasmic segment spans residues 77–101 (NHTWNLVAECQYRRTKNCSAAPNFL). Residues 102–132 (LLSSIVGRAAVAPVTWSVISLLRGEAYVCAL) traverse the membrane as a helical segment. The Extracellular segment spans residues 133-179 (SEFVNPHSLMVGERSFPVAHATEILARFPCGEGPANLSVFREEVSRR). The tract at residues 145–152 (ERSFPVAH) is hemichannel docking. The helical transmembrane segment at 180–206 (LKYESQLFGWLLIGVVAILVFLTKCLK) threads the bilayer. The Cytoplasmic portion of the chain corresponds to 207–323 (HYCSPLSYRQ…DHVEMSLLPS (117 aa)). Positions 214-251 (YRQEAYWAQYRANEDQLFQRTAEVHSRVLAANNVRRFF) are intersubunit interaction.

This sequence belongs to the CALHM family. Homo-undecamer. Two undecameric hemichannels can assemble in a head-to-head manner to form a gap junction.

The protein localises to the cell membrane. It carries out the reaction ATP(in) = ATP(out). Pore-forming subunit of Ca(2+) homeostasis modulator channels. Mediates ATP release from astrocytes and ATP-induced Ca(2+) influx in microglia thus regulating neuronal ATP and Ca(2+) homeostasis, synaptic transmission and neuroinflammatory response. May form intercellular gap junctions. The gating mechanism remains unknown. The protein is Calcium homeostasis modulator protein 2 (CALHM2) of Bos taurus (Bovine).